Consider the following 116-residue polypeptide: NADH-quinone oxidoreductase subunit A (116 aa).

Helical transmembrane passes span 3-23 (FTFL…VIAL), 61-81 (FAIL…WAVV), and 88-108 (QGLV…AYAW).

This sequence belongs to the complex I subunit 3 family. NDH-1 is composed of 14 different subunits. Subunits NuoA, H, J, K, L, M, N constitute the membrane sector of the complex.

It localises to the cell inner membrane. It catalyses the reaction a quinone + NADH + 5 H(+)(in) = a quinol + NAD(+) + 4 H(+)(out). Functionally, NDH-1 shuttles electrons from NADH, via FMN and iron-sulfur (Fe-S) centers, to quinones in the respiratory chain. The immediate electron acceptor for the enzyme in this species is believed to be a menaquinone. Couples the redox reaction to proton translocation (for every two electrons transferred, four hydrogen ions are translocated across the cytoplasmic membrane), and thus conserves the redox energy in a proton gradient. The polypeptide is NADH-quinone oxidoreductase subunit A (Bacteroides thetaiotaomicron (strain ATCC 29148 / DSM 2079 / JCM 5827 / CCUG 10774 / NCTC 10582 / VPI-5482 / E50)).